The sequence spans 217 residues: Enolase-phosphatase E1 (217 aa).

The Mg(2+) site is built by Asp9 and Glu11. Substrate contacts are provided by residues 112 to 113 (SS) and Lys151. Asp176 lines the Mg(2+) pocket.

It belongs to the HAD-like hydrolase superfamily. MasA/MtnC family. Monomer. It depends on Mg(2+) as a cofactor.

It is found in the cytoplasm. Its subcellular location is the nucleus. It carries out the reaction 5-methylsulfanyl-2,3-dioxopentyl phosphate + H2O = 1,2-dihydroxy-5-(methylsulfanyl)pent-1-en-3-one + phosphate. Its pathway is amino-acid biosynthesis; L-methionine biosynthesis via salvage pathway; L-methionine from S-methyl-5-thio-alpha-D-ribose 1-phosphate: step 3/6. The protein operates within amino-acid biosynthesis; L-methionine biosynthesis via salvage pathway; L-methionine from S-methyl-5-thio-alpha-D-ribose 1-phosphate: step 4/6. Its function is as follows. Bifunctional enzyme that catalyzes the enolization of 2,3-diketo-5-methylthiopentyl-1-phosphate (DK-MTP-1-P) into the intermediate 2-hydroxy-3-keto-5-methylthiopentenyl-1-phosphate (HK-MTPenyl-1-P), which is then dephosphorylated to form the acireductone 1,2-dihydroxy-3-keto-5-methylthiopentene (DHK-MTPene). In Lachancea thermotolerans (strain ATCC 56472 / CBS 6340 / NRRL Y-8284) (Yeast), this protein is Enolase-phosphatase E1.